The primary structure comprises 241 residues: Chloride intracellular channel protein 1 (241 aa).

Alanine 2 is subject to N-acetylalanine. A required for insertion into the membrane region spans residues 2–90; it reads AEEQPQVELF…EEFLEAVLCP (89 aa). An N6-acetyllysine modification is found at lysine 13. The G-site motif lies at 24 to 27; sequence CPFS. Cysteine 24 and cysteine 59 are oxidised to a cystine. Residues 26–46 traverse the membrane as a helical segment; the sequence is FSQRLFMVLWLKGVTFNVTTV. The GST C-terminal domain maps to 93 to 233; the sequence is YPKLAALNPE…PDDEEIELAY (141 aa). At lysine 119 the chain carries N6-acetyllysine. Residue serine 121 is modified to Phosphoserine. N6-acetyllysine is present on lysine 131. Serine 156 and serine 211 each carry phosphoserine. Phosphotyrosine is present on tyrosine 233.

This sequence belongs to the chloride channel CLIC family. Monomer. Homodimer (in vitro). Interacts with TRAPPC2. Dimerization requires a conformation change that leads to the exposure of a large hydrophobic surface. In vivo, this may lead to membrane insertion. In terms of tissue distribution, expressed in neonatal and adult cardiomyocytes (at protein level).

It localises to the nucleus. The protein localises to the nucleus membrane. Its subcellular location is the cytoplasm. It is found in the cell membrane. The protein resides in the endoplasmic reticulum. The enzyme catalyses L-dehydroascorbate + 2 glutathione = glutathione disulfide + L-ascorbate. It catalyses the reaction chloride(in) = chloride(out). It carries out the reaction iodide(out) = iodide(in). The catalysed reaction is thiocyanate(in) = thiocyanate(out). The enzyme catalyses nitrate(in) = nitrate(out). It catalyses the reaction bromide(in) = bromide(out). It carries out the reaction fluoride(in) = fluoride(out). In the soluble state, catalyzes glutaredoxin-like thiol disulfide exchange reactions with reduced glutathione as electron donor. Reduces selenite and dehydroascorbate and may act as an antioxidant during oxidative stress response. Can insert into membranes and form voltage-dependent multi-ion conductive channels. Membrane insertion seems to be redox-regulated and may occur only under oxidizing conditions. Involved in regulation of the cell cycle. This chain is Chloride intracellular channel protein 1, found in Rattus norvegicus (Rat).